We begin with the raw amino-acid sequence, 383 residues long: Glucose-1-phosphate adenylyltransferase (383 aa).

Alpha-D-glucose 1-phosphate contacts are provided by residues tyrosine 99, glycine 164, glutamate 179–lysine 180, and serine 190.

It belongs to the bacterial/plant glucose-1-phosphate adenylyltransferase family. As to quaternary structure, homotetramer.

The catalysed reaction is alpha-D-glucose 1-phosphate + ATP + H(+) = ADP-alpha-D-glucose + diphosphate. It participates in glycan biosynthesis; glycogen biosynthesis. In terms of biological role, involved in the biosynthesis of ADP-glucose, a building block required for the elongation reactions to produce glycogen. Catalyzes the reaction between ATP and alpha-D-glucose 1-phosphate (G1P) to produce pyrophosphate and ADP-Glc. The chain is Glucose-1-phosphate adenylyltransferase from Halalkalibacterium halodurans (strain ATCC BAA-125 / DSM 18197 / FERM 7344 / JCM 9153 / C-125) (Bacillus halodurans).